A 33-amino-acid polypeptide reads, in one-letter code: Fatty acid-binding protein, intestinal (33 aa).

This sequence belongs to the calycin superfamily. Fatty-acid binding protein (FABP) family. In terms of tissue distribution, intestine.

Its subcellular location is the cytoplasm. Its function is as follows. FABPs are thought to play a role in the intracellular transport of long-chain fatty acids and their acyl-CoA esters. In Rhamdia sapo (South American catfish), this protein is Fatty acid-binding protein, intestinal (fabp2).